A 171-amino-acid polypeptide reads, in one-letter code: uncharacterized protein (171 aa).

This is an uncharacterized protein from Ureaplasma parvum serovar 3 (strain ATCC 700970).